A 1105-amino-acid chain; its full sequence is Ran-binding protein 6 (1105 aa).

Alanine 2 carries the post-translational modification N-acetylalanine. HEAT repeat units follow at residues 219–257 (FKDF…TVPK), 361–399 (KVVL…GCHQ), 402–440 (EPIL…DFAP), 444–483 (KKFH…DCPK), 866–905 (LPWF…HCSP), 908–946 (FKYV…FGGD), and 949–987 (RSLC…IGKI).

Belongs to the importin beta family.

Its subcellular location is the cytoplasm. The protein localises to the nucleus. Its function is as follows. May function in nuclear protein import as nuclear transport receptor. The sequence is that of Ran-binding protein 6 (Ranbp6) from Mus musculus (Mouse).